The following is a 95-amino-acid chain: Bacterial microcompartment shell protein EutM (95 aa).

Residues 6–90 (ALGMIETKGL…PHFEVDAILP (85 aa)) enclose the BMC domain.

The protein belongs to the bacterial microcompartments protein family. In terms of assembly, homohexamer; has a positively charged pore 9 Angstroms in diameter. The hexamers pack into a two-dimensional array. May interact with EutQ.

It localises to the bacterial microcompartment. It functions in the pathway amine and polyamine degradation; ethanolamine degradation. Its function is as follows. A component of the bacterial microcompartment (BMC) shell dedicated to ethanolamine degradation. Each homohexamer has a central pore with an opening of up to 9.0 Angstroms. Expression of the eut operon may allow this bacteria to use ethanolamine as a carbon, nitrogen and energy source. The pore probably allows metabolite passage into and out of the BMC. This Clostridioides difficile (strain 630) (Peptoclostridium difficile) protein is Bacterial microcompartment shell protein EutM.